We begin with the raw amino-acid sequence, 409 residues long: tRNA(Met) cytidine acetate ligase (409 aa).

ATP is bound by residues 7-20, Gly-102, Asn-169, and Arg-194; that span reads VVEYNPMHNGHLYH.

It belongs to the TmcAL family.

The protein resides in the cytoplasm. The catalysed reaction is cytidine(34) in elongator tRNA(Met) + acetate + ATP = N(4)-acetylcytidine(34) in elongator tRNA(Met) + AMP + diphosphate. Catalyzes the formation of N(4)-acetylcytidine (ac(4)C) at the wobble position of elongator tRNA(Met), using acetate and ATP as substrates. First activates an acetate ion to form acetyladenylate (Ac-AMP) and then transfers the acetyl group to tRNA to form ac(4)C34. The polypeptide is tRNA(Met) cytidine acetate ligase (Clostridium botulinum (strain Kyoto / Type A2)).